Reading from the N-terminus, the 185-residue chain is Ribosome-recycling factor (185 aa).

Belongs to the RRF family.

Its subcellular location is the cytoplasm. In terms of biological role, responsible for the release of ribosomes from messenger RNA at the termination of protein biosynthesis. May increase the efficiency of translation by recycling ribosomes from one round of translation to another. The chain is Ribosome-recycling factor from Streptococcus pneumoniae serotype 2 (strain D39 / NCTC 7466).